The sequence spans 186 residues: Peptidyl-tRNA hydrolase (186 aa).

Residue Tyr14 coordinates tRNA. Residue His19 is the Proton acceptor of the active site. TRNA is bound by residues Tyr61, Asn63, and Asn107.

The protein belongs to the PTH family. Monomer.

It localises to the cytoplasm. The catalysed reaction is an N-acyl-L-alpha-aminoacyl-tRNA + H2O = an N-acyl-L-amino acid + a tRNA + H(+). In terms of biological role, hydrolyzes ribosome-free peptidyl-tRNAs (with 1 or more amino acids incorporated), which drop off the ribosome during protein synthesis, or as a result of ribosome stalling. Catalyzes the release of premature peptidyl moieties from peptidyl-tRNA molecules trapped in stalled 50S ribosomal subunits, and thus maintains levels of free tRNAs and 50S ribosomes. In Helicobacter pylori (strain J99 / ATCC 700824) (Campylobacter pylori J99), this protein is Peptidyl-tRNA hydrolase.